Consider the following 201-residue polypeptide: Ras-related protein Rab-1B (201 aa).

At Met1 the chain carries N-acetylmethionine. The GTP site is built by Ser17, Gly18, Val19, Gly20, Lys21, Ser22, Cys23, Tyr33, Thr34, Glu35, Ser36, Ser39, and Thr40. Position 22 (Ser22) interacts with Mg(2+). The Switch 1 signature appears at 30-45 (DDTYTESYISTIGVDF). Residues Thr40 and Asp63 each coordinate Mg(2+). The interval 64–83 (TAGQERFRTITSSYYRGAHG) is switch 2 region; required for interaction with REP1/CHM. A Switch 2 motif is present at residues 65–80 (AGQERFRTITSSYYRG). Residue Gly66 coordinates GTP. The residue at position 76 (Ser76) is a (Microbial infection) O-(2-cholinephosphoryl)serine. Tyr77 carries the (Microbial infection) O-AMP-tyrosine modification. GTP is bound by residues Asn121, Lys122, Asp124, Ser151, Ala152, and Lys153. The interval 174–201 (GPGAASGGERPNLKIDSTPVKPAGGGCC) is disordered. S-geranylgeranyl cysteine attachment occurs at residues Cys200 and Cys201. Cys201 carries the post-translational modification Cysteine methyl ester.

The protein belongs to the small GTPase superfamily. Rab family. As to quaternary structure, interacts with MICAL1 and MICAL2. Interacts (in GTP-bound form) with MICALCL, MICAL1 and MILCAL3. Interacts with GDI1; the interaction requires the GDP-bound state. Interacts with CHM/REP1; the interaction requires the GDP-bound form and is necessary for prenylation by GGTase II. Interacts with RabGAP TBC1D20. Interacts (in GDP-bound form) with lipid phosphatase MTMR6 (via GRAM domain); the interaction regulates MTMR6 recruitment to the endoplasmic reticulum-Golgi intermediate compartment. Interacts (in GDP-bound form) with lipid phosphatase MTMR7. In terms of assembly, (Microbial infection) Interacts with L.pneumophila AnkX. Interacts with L.pneumophila Lem3. Interacts with L.pneumophila SidD. Interacts with L.pneumophila DrrA. The cofactor is Mg(2+). Post-translationally, prenylated; by GGTase II, only after interaction of the substrate with Rab escort protein 1 (REP1). In terms of processing, (Microbial infection) AMPylation at Tyr-77 by L.pneumophila DrrA occurs in the switch 2 region and leads to moderate inactivation of the GTPase activity. It appears to prolong the lifetime of the GTP state of RAB1B by restricting access of GTPase effectors to switch 2 and blocking effector-stimulated GTP hydrolysis, thereby rendering RAB1B constitutively active. It is later de-AMPylated by L.pneumophila SidD, releasing RAB1B from bacterial phagosomes. (Microbial infection) Phosphocholinated at Ser-76 by L.pneumophila AnkX, leading to displace GDP dissociation inhibitors (GDI). Both GDP-bound and GTP-bound forms can be phosphocholinated. Dephosphocholinated by L.pneumophila Lem3, restoring accessibility to L.pneumophila GTPase effector LepB. Post-translationally, (Microbial infection) Glycosylated by S.typhimurium protein Ssek3: arginine GlcNAcylation prevents GTPase activity, thereby disrupting vesicular protein transport from the endoplasmic reticulum (ER) to the Golgi compartment.

The protein resides in the cytoplasm. The protein localises to the membrane. It localises to the preautophagosomal structure membrane. Its subcellular location is the perinuclear region. The enzyme catalyses GTP + H2O = GDP + phosphate + H(+). Its activity is regulated as follows. Regulated by guanine nucleotide exchange factors (GEFs) which promote the exchange of bound GDP for free GTP. Regulated by GTPase activating proteins (GAPs) including TBC1D20 which increases the GTP hydrolysis activity. Inhibited by GDP dissociation inhibitors (GDIs). In terms of biological role, the small GTPases Rab are key regulators of intracellular membrane trafficking, from the formation of transport vesicles to their fusion with membranes. Rabs cycle between an inactive GDP-bound form and an active GTP-bound form that is able to recruit to membranes different set of downstream effectors directly responsible for vesicle formation, movement, tethering and fusion. Plays a role in the initial events of the autophagic vacuole development which take place at specialized regions of the endoplasmic reticulum. Regulates vesicular transport between the endoplasmic reticulum and successive Golgi compartments. Required to modulate the compacted morphology of the Golgi. Promotes the recruitment of lipid phosphatase MTMR6 to the endoplasmic reticulum-Golgi intermediate compartment. The polypeptide is Ras-related protein Rab-1B (Homo sapiens (Human)).